A 392-amino-acid chain; its full sequence is Aminomethyltransferase, mitochondrial (392 aa).

The transit peptide at 1 to 16 (MLRAGCRAALARRHLS) directs the protein to the mitochondrion. Positions 221, 250, and 388 each coordinate substrate.

The protein belongs to the GcvT family. The glycine cleavage system is composed of four proteins: P, T, L and H.

The protein localises to the mitochondrion. The enzyme catalyses N(6)-[(R)-S(8)-aminomethyldihydrolipoyl]-L-lysyl-[protein] + (6S)-5,6,7,8-tetrahydrofolate = N(6)-[(R)-dihydrolipoyl]-L-lysyl-[protein] + (6R)-5,10-methylene-5,6,7,8-tetrahydrofolate + NH4(+). In terms of biological role, the glycine cleavage system catalyzes the degradation of glycine. This is Aminomethyltransferase, mitochondrial from Gallus gallus (Chicken).